Reading from the N-terminus, the 218-residue chain is Superoxide dismutase [Mn] 2, mitochondrial (218 aa).

Residues Met1–Ser24 constitute a mitochondrion transit peptide. Mn(2+)-binding residues include His50, His98, Asp179, and His183.

Belongs to the iron/manganese superoxide dismutase family. In terms of assembly, homotetramer. Requires Mn(2+) as cofactor. As to expression, expressed in pharynx and rectum. Upon thermal stress, expressed in vulva, body wall muscles and hypodermis.

Its subcellular location is the mitochondrion. It catalyses the reaction 2 superoxide + 2 H(+) = H2O2 + O2. Destroys superoxide anion radicals which are normally produced within the cells and which are toxic to biological systems. The chain is Superoxide dismutase [Mn] 2, mitochondrial (sod-3) from Caenorhabditis elegans.